A 244-amino-acid chain; its full sequence is Ribosomal RNA small subunit methyltransferase NEP1 (244 aa).

The tract at residues 1–33 is disordered; sequence MSAASGGFQPRERRFSVQEQDWETTPPKKLRLG. A phosphoserine mark is found at S5 and S16. S-adenosyl-L-methionine-binding positions include T176, G201, G206, and 219–224; that span reads ISNYPL.

Belongs to the class IV-like SAM-binding methyltransferase superfamily. RNA methyltransferase NEP1 family. As to quaternary structure, homodimer. Part of the small subunit (SSU) processome, composed of more than 70 proteins and the RNA chaperone small nucleolar RNA (snoRNA) U3.

Its subcellular location is the nucleus. It localises to the nucleolus. The enzyme catalyses pseudouridine(1248) in human 18S rRNA + S-adenosyl-L-methionine = N(1)-methylpseudouridine(1248) in human 18S rRNA + S-adenosyl-L-homocysteine + H(+). Functionally, S-adenosyl-L-methionine-dependent pseudouridine N(1)-methyltransferase that methylates pseudouridine at position in 18S rRNA. Involved the biosynthesis of the hypermodified N1-methyl-N3-(3-amino-3-carboxypropyl) pseudouridine (m1acp3-Psi) conserved in eukaryotic 18S rRNA. Is not able to methylate uridine at this position. Also has an essential role in 40S ribosomal subunit biogenesis independent on its methyltransferase activity, facilitating the incorporation of ribosomal protein S19 during the formation of pre-ribosomes. Part of the small subunit (SSU) processome, first precursor of the small eukaryotic ribosomal subunit. During the assembly of the SSU processome in the nucleolus, many ribosome biogenesis factors, an RNA chaperone and ribosomal proteins associate with the nascent pre-rRNA and work in concert to generate RNA folding, modifications, rearrangements and cleavage as well as targeted degradation of pre-ribosomal RNA by the RNA exosome. The polypeptide is Ribosomal RNA small subunit methyltransferase NEP1 (Mus musculus (Mouse)).